The primary structure comprises 393 residues: Chalcone synthase LF2 (393 aa).

Residue C164 is part of the active site.

The protein belongs to the thiolase-like superfamily. Chalcone/stilbene synthases family.

It carries out the reaction (E)-4-coumaroyl-CoA + 3 malonyl-CoA + 3 H(+) = 2',4,4',6'-tetrahydroxychalcone + 3 CO2 + 4 CoA. It participates in secondary metabolite biosynthesis; flavonoid biosynthesis. Functionally, the primary product of this enzyme is 4,2',4',6'-tetrahydroxychalcone (also termed naringenin-chalcone or chalcone) which can under specific conditions spontaneously isomerize into naringenin. The polypeptide is Chalcone synthase LF2 (CHS-LF2) (Ipomoea batatas (Sweet potato)).